We begin with the raw amino-acid sequence, 117 residues long: Putative membrane protein insertion efficiency factor (117 aa).

Belongs to the UPF0161 family.

The protein resides in the cell inner membrane. In terms of biological role, could be involved in insertion of integral membrane proteins into the membrane. The chain is Putative membrane protein insertion efficiency factor from Bartonella bacilliformis (strain ATCC 35685 / KC583 / Herrer 020/F12,63).